Consider the following 314-residue polypeptide: UDP-glucose 4-epimerase (314 aa).

NAD(+) is bound by residues 11 to 12, 31 to 36, 56 to 57, and 77 to 81; these read FI, DNFATG, DI, and LAAQI. The substrate site is built by S121 and Y146. 2 residues coordinate NAD(+): Y146 and K150. The Proton acceptor role is filled by Y146. Substrate is bound by residues N175, 189 to 190, 204 to 206, R213, and 271 to 274; these read VV, RVF, and RLGD.

It belongs to the NAD(P)-dependent epimerase/dehydratase family. As to quaternary structure, homodimer. NAD(+) is required as a cofactor.

The catalysed reaction is UDP-alpha-D-glucose = UDP-alpha-D-galactose. It functions in the pathway carbohydrate metabolism; galactose metabolism. In terms of biological role, involved in the metabolism of galactose. Catalyzes the conversion of UDP-galactose (UDP-Gal) to UDP-glucose (UDP-Glc) through a mechanism involving the transient reduction of NAD. This chain is UDP-glucose 4-epimerase (galE1), found in Mycobacterium tuberculosis (strain CDC 1551 / Oshkosh).